Here is a 546-residue protein sequence, read N- to C-terminus: Chaperonin GroEL 2 (546 aa).

Residues Thr29–Pro32, Asp86–Thr90, Gly418, Asn482–Ala484, and Asp498 each bind ATP.

This sequence belongs to the chaperonin (HSP60) family. As to quaternary structure, forms a cylinder of 14 subunits composed of two heptameric rings stacked back-to-back. Interacts with the co-chaperonin GroES.

The protein localises to the cytoplasm. It catalyses the reaction ATP + H2O + a folded polypeptide = ADP + phosphate + an unfolded polypeptide.. Together with its co-chaperonin GroES, plays an essential role in assisting protein folding. The GroEL-GroES system forms a nano-cage that allows encapsulation of the non-native substrate proteins and provides a physical environment optimized to promote and accelerate protein folding. The sequence is that of Chaperonin GroEL 2 from Corynebacterium diphtheriae (strain ATCC 700971 / NCTC 13129 / Biotype gravis).